Here is a 395-residue protein sequence, read N- to C-terminus: Non-homologous end joining protein Ku (395 aa).

A Ku domain is found at 9 to 181 (ISFGLVSIPI…PPEDAAPDGD (173 aa)). The tract at residues 252 to 395 (RAARTSRDDE…SASSRKRTSA (144 aa)) is disordered. Composition is skewed to polar residues over residues 283–292 (SSKTSGQSSG) and 311–320 (GKTVTRSGDS). Positions 351-361 (TARKTTAKKTT) are enriched in basic residues. The segment covering 362-371 (AKGTTGTTAA) has biased composition (low complexity).

The protein belongs to the prokaryotic Ku family. Homodimer. Interacts with LigD.

Functionally, with LigD forms a non-homologous end joining (NHEJ) DNA repair enzyme, which repairs dsDNA breaks with reduced fidelity. Binds linear dsDNA with 5'- and 3'- overhangs but not closed circular dsDNA nor ssDNA. Recruits and stimulates the ligase activity of LigD. The chain is Non-homologous end joining protein Ku from Streptomyces griseus subsp. griseus (strain JCM 4626 / CBS 651.72 / NBRC 13350 / KCC S-0626 / ISP 5235).